The following is a 344-amino-acid chain: DNA-directed RNA polymerase subunit alpha (344 aa).

Positions Met-1–Glu-232 are alpha N-terminal domain (alpha-NTD). The segment at Leu-270 to Lys-344 is alpha C-terminal domain (alpha-CTD).

It belongs to the RNA polymerase alpha chain family. In terms of assembly, in plastids the minimal PEP RNA polymerase catalytic core is composed of four subunits: alpha, beta, beta', and beta''. When a (nuclear-encoded) sigma factor is associated with the core the holoenzyme is formed, which can initiate transcription.

The protein localises to the plastid. The protein resides in the chloroplast. It catalyses the reaction RNA(n) + a ribonucleoside 5'-triphosphate = RNA(n+1) + diphosphate. In terms of biological role, DNA-dependent RNA polymerase catalyzes the transcription of DNA into RNA using the four ribonucleoside triphosphates as substrates. This Spirogyra maxima (Green alga) protein is DNA-directed RNA polymerase subunit alpha.